Consider the following 119-residue polypeptide: Large ribosomal subunit protein bL19 (119 aa).

It belongs to the bacterial ribosomal protein bL19 family.

Functionally, this protein is located at the 30S-50S ribosomal subunit interface and may play a role in the structure and function of the aminoacyl-tRNA binding site. This chain is Large ribosomal subunit protein bL19, found in Limosilactobacillus reuteri (strain DSM 20016) (Lactobacillus reuteri).